The primary structure comprises 143 residues: Hemoglobin anodic subunit alpha (143 aa).

Residue Ser-2 is modified to N-acetylserine. In terms of domain architecture, Globin spans 2 to 143; the sequence is SLSAKDMAVV…FTLALSERYR (142 aa). Residue His-60 coordinates O2. Position 89 (His-89) interacts with heme b.

The protein belongs to the globin family. In terms of assembly, heterotetramer of two alpha chains and two beta chains. As to expression, red blood cells.

In terms of biological role, involved in oxygen transport from gills to the various peripheral tissues. This chain is Hemoglobin anodic subunit alpha (hba), found in Anguilla anguilla (European freshwater eel).